Consider the following 220-residue polypeptide: MSEEEVSFSRDYFVEMDVRDEEAHELASDWFDEVVFTKKLVLEDPPDWGSLKEELKELRGKYGKVALLLVTRKPSLIREVKSRNLKALLYVQGGDMRINRMAIESGVDALISPWFGRKDPGFDHTLAGMAARRGVAIGFSLSPLLNANPYGRAQILRFMMKTWQLVKKYRVPRFITSSAESRWEVRGPRDLMSLGINIGMEIPEARASLNFYPRTIVWKL.

The protein belongs to the eukaryotic/archaeal RNase P protein component 3 family. In terms of assembly, consists of a catalytic RNA component and at least 4-5 protein subunits.

It localises to the cytoplasm. The enzyme catalyses Endonucleolytic cleavage of RNA, removing 5'-extranucleotides from tRNA precursor.. Its function is as follows. Part of ribonuclease P, a protein complex that generates mature tRNA molecules by cleaving their 5'-ends. This chain is Ribonuclease P protein component 3, found in Thermococcus kodakarensis (strain ATCC BAA-918 / JCM 12380 / KOD1) (Pyrococcus kodakaraensis (strain KOD1)).